We begin with the raw amino-acid sequence, 277 residues long: Large ribosomal subunit protein uL2 (277 aa).

Disordered regions lie at residues 37-60 (KNST…GHKH) and 223-264 (VVMN…NKRT). Positions 39–49 (STAGRNNNGHI) are enriched in polar residues. A compositionally biased stretch (basic residues) spans 50-60 (TTRHKGGGHKH). The segment covering 229-244 (DHPHGGGEGRTGEARE) has biased composition (basic and acidic residues).

It belongs to the universal ribosomal protein uL2 family. Part of the 50S ribosomal subunit. Forms a bridge to the 30S subunit in the 70S ribosome.

Functionally, one of the primary rRNA binding proteins. Required for association of the 30S and 50S subunits to form the 70S ribosome, for tRNA binding and peptide bond formation. It has been suggested to have peptidyltransferase activity; this is somewhat controversial. Makes several contacts with the 16S rRNA in the 70S ribosome. The chain is Large ribosomal subunit protein uL2 from Neisseria meningitidis serogroup B (strain ATCC BAA-335 / MC58).